A 723-amino-acid polypeptide reads, in one-letter code: ATP-dependent DNA helicase RRM3 (723 aa).

Disordered regions lie at residues 1–31 and 61–101; these read MFRS…SGSH and DLES…DDDP. Ser-64 bears the Phosphoserine mark. Residues 83-96 show a composition bias toward low complexity; the sequence is NNSSSLFSQSQGSF. An ATP-binding site is contributed by 254–261; sequence GSAGTGKS. A DNA-binding region spans residues 682–701; that stretch reads QVYVALSRAVTMDTLQVLNF.

It belongs to the helicase family. Interacts with DEF1 and POL30.

The protein resides in the nucleus. It localises to the chromosome. The protein localises to the telomere. It carries out the reaction Couples ATP hydrolysis with the unwinding of duplex DNA at the replication fork by translocating in the 5'-3' direction. This creates two antiparallel DNA single strands (ssDNA). The leading ssDNA polymer is the template for DNA polymerase III holoenzyme which synthesizes a continuous strand.. It catalyses the reaction ATP + H2O = ADP + phosphate + H(+). Functionally, 5' to 3' DNA replicative helicase recruited to paused replisomes to promote fork progression throughout nonhistone protein-DNA complexes, naturally occurring impediments that are encountered in each S phase where replication forks pauses. Needed for normal fork progression through over 1000 discrete sites scattered throughout the genome, like rDNA, tRNA genes, centromeres, active replication origins, or transcriptional silencers. Required for timely replication of the telomere and subtelomeric DNA and for wild-type levels of telomeric silencing. Involved in regulation of Ty1 transposition and protects the genome from instability at nascent sites of retrotransposition. Involved in DNA repair during stalled replication fork, regulation of fragile sites expression and essential for genome stability. Also plays a role in mtDNA replication. Has G-quadruplex (G4) unwinding activity and can suppress G4-induced genome instability when PIF1 levels are low. This Saccharomyces cerevisiae (strain ATCC 204508 / S288c) (Baker's yeast) protein is ATP-dependent DNA helicase RRM3.